A 116-amino-acid polypeptide reads, in one-letter code: Large ribosomal subunit protein bL17 (116 aa).

It belongs to the bacterial ribosomal protein bL17 family. As to quaternary structure, part of the 50S ribosomal subunit. Contacts protein L32.

The sequence is that of Large ribosomal subunit protein bL17 from Thermosynechococcus vestitus (strain NIES-2133 / IAM M-273 / BP-1).